We begin with the raw amino-acid sequence, 76 residues long: Large ribosomal subunit protein eL38 (76 aa).

It belongs to the eukaryotic ribosomal protein eL38 family.

The polypeptide is Large ribosomal subunit protein eL38 (RpL38) (Lysiphlebus testaceipes (Greenbugs aphid parastoid)).